A 112-amino-acid chain; its full sequence is uncharacterized protein (112 aa).

This sequence to M.jannaschii MJ1244 and M.thermoautotrophicum MTH1110.

This is an uncharacterized protein from Methanocaldococcus jannaschii (strain ATCC 43067 / DSM 2661 / JAL-1 / JCM 10045 / NBRC 100440) (Methanococcus jannaschii).